Consider the following 1147-residue polypeptide: Myosin light chain kinase, smooth muscle (1147 aa).

An actin-binding region spans residues 1–41 (MDFRANLQRQVKPKTVSEEERKVHSPQQVDFRSVLAKKGTP). Positions 1–330 (MDFRANLQRQ…PPASPGTAPT (330 aa)) are disordered. The segment at 26–41 (PQQVDFRSVLAKKGTP) is calmodulin-binding. Pro residues predominate over residues 43–55 (TPVPEKAPPPKPA). A run of 2 repeats spans residues 100-111 (SLKPVANAKPAE) and 112-123 (TLKPVANTKPAE). A 16 X 12 AA tandem repeats region spans residues 100-288 (SLKPVANAKP…KAVANAKPAE (189 aa)). The 3; truncated repeat unit spans residues 124–132 (TLKPVANAE). 13 tandem repeats follow at residues 133-144 (TLKPMGNAKPAE), 145-156 (SSKPVGNTKPAE), 157-168 (TLKPVGNTKPAE), 169-180 (TLKPVGNIKPAE), 181-192 (TLKPVGNIKPAE), 193-204 (TLKPVGNTKPTE), 205-216 (TLKPVANAKSAE), 217-228 (TLKPIANTKPAE), 229-240 (TLKPVGNAKPAE), 241-252 (TLKPVGNAKPAE), 253-264 (TLKPVGNAKPAE), 265-276 (TLKPVGNAKPAE), and 277-288 (TLKAVANAKPAE). The actin-binding (calcium/calmodulin-insensitive) stretch occupies residues 292–692 (PAGKEELKKE…TVTVNTEQKV (401 aa)). Over residues 293 to 320 (AGKEELKKEVQNDVNCKREKAGAADNEK) the composition is skewed to basic and acidic residues. 2 Ig-like C2-type domains span residues 329–417 (PTFK…CHVT) and 469–557 (PQIP…VNLT). Cysteine 350 and cysteine 401 are disulfide-bonded. Disordered regions lie at residues 424–476 (SENA…QFPE) and 644–678 (SEPSQESELTTVGEKPEEPKDEVEEVSDDDEKEPE). The span at 459–472 (PKTPPKAATPPQIP) shows a compositional bias: pro residues. The Fibronectin type-III domain occupies 565–657 (PAGTPCASDI…QESELTTVGE (93 aa)). Positions 644-653 (SEPSQESELT) are enriched in polar residues. The segment covering 662 to 677 (PKDEVEEVSDDDEKEP) has biased composition (acidic residues). A Phosphoserine modification is found at serine 670. At tyrosine 681 the chain carries Phosphotyrosine; by ABL1. One can recognise a Protein kinase domain in the interval 696–951 (YDIEERLGSG…CTQCLQHPWL (256 aa)). Residues 702-710 (LGSGKFGQV) and lysine 725 contribute to the ATP site. A Phosphotyrosine; by ABL1 modification is found at tyrosine 807. Catalysis depends on aspartate 817, which acts as the Proton acceptor. A Phosphotyrosine; by ABL1 modification is found at tyrosine 867. Residues 943 to 1006 (TQCLQHPWLM…SGLSGRKSST (64 aa)) are calmodulin-binding. A phosphoserine mark is found at serine 991, serine 992, serine 1004, serine 1005, and serine 1008. The tract at residues 999-1019 (LSGRKSSTGSPTSPLTAERLE) is disordered. Residues 1002–1013 (RKSSTGSPTSPL) are compositionally biased toward polar residues. At threonine 1010 the chain carries Phosphothreonine. Serine 1011 is subject to Phosphoserine. The Ig-like C2-type 3 domain maps to 1041–1130 (PYFSKTIRDL…GEATCTAELI (90 aa)). The cysteines at positions 1062 and 1114 are disulfide-linked.

The protein belongs to the protein kinase superfamily. CAMK Ser/Thr protein kinase family. In terms of assembly, all isoforms including Telokin bind calmodulin. Interacts with SVIL. Interacts with CTTN; this interaction is reduced during thrombin-induced endothelial cell (EC) contraction but is promoted by the barrier-protective agonist sphingosine 1-phosphate (S1P) within lamellipodia. A complex made of ABL1, CTTN and MYLK regulates cortical actin-based cytoskeletal rearrangement critical to sphingosine 1-phosphate (S1P)-mediated endothelial cell (EC) barrier enhancement. Binds to NAA10/ARD1 and PTK2B/PYK2. Requires Mg(2+) as cofactor. It depends on Ca(2+) as a cofactor. In terms of processing, the C-terminus is deglutamylated by AGTPBP1/CCP1, AGBL1/CCP4 and AGBL4/CCP6, leading to the formation of Myosin light chain kinase, smooth muscle, deglutamylated form. The consequences of C-terminal deglutamylation are unknown. Post-translationally, can probably be down-regulated by phosphorylation. Tyrosine phosphorylation by ABL1 increases kinase activity, reverses MLCK-mediated inhibition of Arp2/3-mediated actin polymerization, and enhances CTTN-binding. Phosphorylation by SRC promotes CTTN binding. As to expression, isoform Telokin is found in all smooth muscle tested except the aorta. It is not present in non-muscle tissue.

The protein localises to the cytoplasm. Its subcellular location is the cell projection. The protein resides in the lamellipodium. It is found in the cleavage furrow. It localises to the cytoskeleton. The protein localises to the stress fiber. It catalyses the reaction L-seryl-[myosin light chain] + ATP = O-phospho-L-seryl-[myosin light chain] + ADP + H(+). The enzyme catalyses L-threonyl-[myosin light chain] + ATP = O-phospho-L-threonyl-[myosin light chain] + ADP + H(+). With respect to regulation, all catalytically active isoforms require binding to calcium and calmodulin for activation. Calcium/calmodulin-dependent myosin light chain kinase implicated in smooth muscle contraction via phosphorylation of myosin light chains (MLC). Also regulates actin-myosin interaction through a non-kinase activity. Phosphorylates PTK2B/PYK2 and myosin light-chains. Involved in the inflammatory response (e.g. apoptosis, vascular permeability, leukocyte diapedesis), cell motility and morphology, airway hyperreactivity and other activities relevant to asthma. Required for tonic airway smooth muscle contraction that is necessary for physiological and asthmatic airway resistance. Necessary for gastrointestinal motility. Implicated in the regulation of endothelial as well as vascular permeability, probably via the regulation of cytoskeletal rearrangements. In the nervous system it has been shown to control the growth initiation of astrocytic processes in culture and to participate in transmitter release at synapses formed between cultured sympathetic ganglion cells. Critical participant in signaling sequences that result in fibroblast apoptosis. Plays a role in the regulation of epithelial cell survival. Required for epithelial wound healing, especially during actomyosin ring contraction during purse-string wound closure. Mediates RhoA-dependent membrane blebbing. Triggers TRPC5 channel activity in a calcium-dependent signaling, by inducing its subcellular localization at the plasma membrane. Promotes cell migration (including tumor cells) and tumor metastasis. PTK2B/PYK2 activation by phosphorylation mediates ITGB2 activation and is thus essential to trigger neutrophil transmigration during acute lung injury (ALI). May regulate optic nerve head astrocyte migration. Probably involved in mitotic cytoskeletal regulation. Regulates tight junction probably by modulating ZO-1 exchange in the perijunctional actomyosin ring. Mediates burn-induced microvascular barrier injury; triggers endothelial contraction in the development of microvascular hyperpermeability by phosphorylating MLC. Essential for intestinal barrier dysfunction. Mediates Giardia spp.-mediated reduced epithelial barrier function during giardiasis intestinal infection via reorganization of cytoskeletal F-actin and tight junctional ZO-1. Necessary for hypotonicity-induced Ca(2+) entry and subsequent activation of volume-sensitive organic osmolyte/anion channels (VSOAC) in cervical cancer cells. This is Myosin light chain kinase, smooth muscle (MYLK) from Oryctolagus cuniculus (Rabbit).